Reading from the N-terminus, the 341-residue chain is Ferrochelatase (341 aa).

Fe cation is bound by residues histidine 189 and glutamate 293.

It belongs to the ferrochelatase family.

The protein resides in the cytoplasm. The enzyme catalyses heme b + 2 H(+) = protoporphyrin IX + Fe(2+). The protein operates within porphyrin-containing compound metabolism; protoheme biosynthesis; protoheme from protoporphyrin-IX: step 1/1. Catalyzes the ferrous insertion into protoporphyrin IX. In Stutzerimonas stutzeri (strain A1501) (Pseudomonas stutzeri), this protein is Ferrochelatase.